A 32-amino-acid chain; its full sequence is MSDIN-like toxin proprotein 1 (32 aa).

The propeptide occupies 1–10 (MSDINATRLP). Residues 11–18 (IFWFIYFP) constitute a cross-link (cyclopeptide (Ile-Pro)). A propeptide spanning residues 19-32 (CVSDVDSTLTRGER) is cleaved from the precursor.

Belongs to the MSDIN fungal toxin family. Processed by the macrocyclase-peptidase enzyme POPB to yield a toxic cyclic octapeptide. POPB first removes 10 residues from the N-terminus. Conformational trapping of the remaining peptide forces the enzyme to release this intermediate rather than proceed to macrocyclization. The enzyme rebinds the remaining peptide in a different conformation and catalyzes macrocyclization of the N-terminal 8 residues. In terms of tissue distribution, expressed in basidiocarps.

In terms of biological role, probable toxin that belongs to the MSDIN-like toxin family responsible for a large number of food poisoning cases and deaths. The protein is MSDIN-like toxin proprotein 1 of Amanita exitialis (Guangzhou destroying angel).